Reading from the N-terminus, the 504-residue chain is Pentatricopeptide repeat-containing protein At1g09220, mitochondrial (504 aa).

The transit peptide at 1–87 (MFLFSSRRIT…FLFNPLLRCY (87 aa)) directs the protein to the mitochondrion. PPR repeat units lie at residues 76-110 (KLFL…HFLS), 120-156 (DSFT…GFES), 157-187 (HVYV…MPER), 188-222 (NPVT…TVVS), 223-253 (WTTI…DAIK), 255-289 (NEIT…GFVP), 291-321 (DIRV…IPNG), 324-358 (NLVS…GLKP), 359-390 (NRVT…MVNE), and 396-430 (DVKH…EKAV). Residues 431 to 504 (VWRMLLGACS…AKLPGHSQVT (74 aa)) form a type E motif; degenerate region.

It belongs to the PPR family. PCMP-E subfamily.

The protein resides in the mitochondrion. This chain is Pentatricopeptide repeat-containing protein At1g09220, mitochondrial (PCMP-E25), found in Arabidopsis thaliana (Mouse-ear cress).